The sequence spans 188 residues: PRA1 family protein 3 (188 aa).

Methionine 1 carries the post-translational modification N-acetylmethionine. Over 1–35 (MDVNIAPLRAWDDFFPGSDRFARPDFRDISKWNNR) the chain is Cytoplasmic. The next 2 helical transmembrane spans lie at 36-56 (VVSN…MMIS) and 57-77 (VVGF…VLVF). The Cytoplasmic portion of the chain corresponds to 78–93 (TGFVWAAHNKDILRRL). A run of 2 helical transmembrane segments spans residues 94 to 114 (KKQY…FLIS) and 115 to 135 (MFGG…LMFI). Positions 103–117 (MVVMLASYFLISMFG) are required for homodimer formation and heterodimer formation with ARL6IP1. Topologically, residues 136–188 (HASLRLRNLKNKLENKIEGIGLKRTPMGIVLDALEQQEENISKFADYISKVNE) are cytoplasmic. Residues 136 to 188 (HASLRLRNLKNKLENKIEGIGLKRTPMGIVLDALEQQEENISKFADYISKVNE) are targeting to endoplasmic reticulum membrane.

Belongs to the PRA1 family. Homodimer. Heterodimer with ARL6IP1. Forms multimers. Interacts with ARL6. Interacts with prenylated RAB1A and RAB3A. Interacts with SLC1A1/EAAC1. Interacts with RTN2 (via first transmembrane domain). Does not interact with VAMP1, VAMP2 or VAMP3.

It localises to the endoplasmic reticulum membrane. The protein resides in the cell membrane. It is found in the cytoplasm. The protein localises to the cytoskeleton. Functionally, regulates intracellular concentrations of taurine and glutamate. Negatively modulates SLC1A1/EAAC1 glutamate transport activity by decreasing its affinity for glutamate in a PKC activity-dependent manner. Plays a role in the retention of SLC1A1/EAAC1 in the endoplasmic reticulum. This is PRA1 family protein 3 (ARL6IP5) from Sus scrofa (Pig).